The following is a 427-amino-acid chain: Phosphatidylglycerol--prolipoprotein diacylglyceryl transferase (427 aa).

4 helical membrane-spanning segments follow: residues 21-41 (VPIR…LLIG), 53-73 (GVIY…GRLY), 96-116 (IWDG…GAWI), and 122-142 (GIPL…AQAI). R144 serves as a coordination point for a 1,2-diacyl-sn-glycero-3-phospho-(1'-sn-glycerol). 2 helical membrane passes run 189 to 209 (VALV…LIFV) and 256 to 276 (INSF…MAAP). The tract at residues 280-427 (EDPESLRGNQ…ARLRERLSGR (148 aa)) is disordered. Residues 299–330 (EPATVAATTEAATEGVAAPADGAEAAGADATA) show a composition bias toward low complexity. Positions 332–346 (RPEESAEPDVEKPES) are enriched in basic and acidic residues. The segment covering 347–404 (EETEAAEEASEPEAEEPEAPEAEEPEEPETEEPEADSGEEPEEESGEAPEQLVAEEPE) has biased composition (acidic residues). The span at 411-427 (ETKRRWGARLRERLSGR) shows a compositional bias: basic and acidic residues.

Belongs to the Lgt family.

It localises to the cell membrane. It catalyses the reaction L-cysteinyl-[prolipoprotein] + a 1,2-diacyl-sn-glycero-3-phospho-(1'-sn-glycerol) = an S-1,2-diacyl-sn-glyceryl-L-cysteinyl-[prolipoprotein] + sn-glycerol 1-phosphate + H(+). It functions in the pathway protein modification; lipoprotein biosynthesis (diacylglyceryl transfer). In terms of biological role, catalyzes the transfer of the diacylglyceryl group from phosphatidylglycerol to the sulfhydryl group of the N-terminal cysteine of a prolipoprotein, the first step in the formation of mature lipoproteins. This chain is Phosphatidylglycerol--prolipoprotein diacylglyceryl transferase, found in Mycolicibacterium paratuberculosis (strain ATCC BAA-968 / K-10) (Mycobacterium paratuberculosis).